We begin with the raw amino-acid sequence, 354 residues long: NADH-quinone oxidoreductase subunit H (354 aa).

The next 8 membrane-spanning stretches (helical) occupy residues 16 to 36 (WLAVLITLVLQAVAVILPVMI), 90 to 110 (YLFIIAPILALAPAVAAWAVI), 126 to 146 (VLYVLAVASIGVYGIVISGWA), 170 to 190 (MGFALVTVLMVADTMNLTGIV), 197 to 217 (IWNWYWIPLLPMFFVYFISGL), 249 to 269 (VFFLAEYAMMILISFMTAIMF), 290 to 310 (VPGFVWLFAKVAFLLFLFLWF), and 329 to 349 (VLIPVTIVWVFVVGVMEYFKV).

The protein belongs to the complex I subunit 1 family. NDH-1 is composed of 14 different subunits. Subunits NuoA, H, J, K, L, M, N constitute the membrane sector of the complex.

The protein localises to the cell inner membrane. The enzyme catalyses a quinone + NADH + 5 H(+)(in) = a quinol + NAD(+) + 4 H(+)(out). NDH-1 shuttles electrons from NADH, via FMN and iron-sulfur (Fe-S) centers, to quinones in the respiratory chain. The immediate electron acceptor for the enzyme in this species is believed to be ubiquinone. Couples the redox reaction to proton translocation (for every two electrons transferred, four hydrogen ions are translocated across the cytoplasmic membrane), and thus conserves the redox energy in a proton gradient. This subunit may bind ubiquinone. The chain is NADH-quinone oxidoreductase subunit H from Hydrogenovibrio crunogenus (strain DSM 25203 / XCL-2) (Thiomicrospira crunogena).